A 420-amino-acid polypeptide reads, in one-letter code: DNA primase small subunit (420 aa).

Met1 bears the N-acetylmethionine mark. Catalysis depends on residues Glu44, Asp109, and Asp111. Asp109 and Asp111 together coordinate Mg(2+). The Mn(2+) site is built by Asp109 and Asp111. Position 109 to 111 (109 to 111) interacts with a ribonucleoside 5'-triphosphate; sequence DID. Residues Cys121, Cys122, Cys128, and Cys131 each contribute to the Zn(2+) site. The Zinc knuckle motif motif lies at 121–131; that stretch reads CCSSADICPKC. A ribonucleoside 5'-triphosphate is bound at residue 160 to 166; the sequence is SGRRGVH. Position 306 (Asp306) interacts with Mg(2+). Mn(2+) is bound at residue Asp306. A ribonucleoside 5'-triphosphate is bound by residues 315–318 and His324; that span reads HLLK. Residues 363 to 373 are compositionally biased toward acidic residues; that stretch reads NEEEKEENEAE. Positions 363–382 are disordered; sequence NEEEKEENEAESDVKHRTRD.

This sequence belongs to the eukaryotic-type primase small subunit family. As to quaternary structure, heterodimer of a catalytic subunit PRIM1 and a regulatory subunit PRIM2, also known as the DNA primase complex. Interacts with PRIM2 (via C-terminus). Component of the alpha DNA polymerase complex (also known as the alpha DNA polymerase-primase complex) consisting of four subunits: the catalytic subunit POLA1, the regulatory subunit POLA2, and the primase complex subunits PRIM1 and PRIM2 respectively. Within the complex, POLA1 directly interacts with PRIM2. The cofactor is Mg(2+). Requires Mn(2+) as cofactor.

It catalyses the reaction ssDNA + n NTP = ssDNA/pppN(pN)n-1 hybrid + (n-1) diphosphate.. With respect to regulation, the presence of the regulatory subunit PRIM2/p58 accelerates the kinetics of initiation and primer extension. Inhibited by arabinose nucleoside derivatives such as fludarabine and vidarabine. Its function is as follows. Catalytic subunit of the DNA primase complex and component of the DNA polymerase alpha complex (also known as the alpha DNA polymerase-primase complex - primosome/replisome) which play an essential role in the initiation of DNA synthesis. During the S phase of the cell cycle, the DNA polymerase alpha complex (composed of a catalytic subunit POLA1, an accessory subunit POLA2 and two primase subunits, the catalytic subunit PRIM1 and the regulatory subunit PRIM2) is recruited to DNA at the replicative forks via direct interactions with MCM10 and WDHD1. The primase subunit of the polymerase alpha complex initiates DNA synthesis by oligomerising short RNA primers on both leading and lagging strands. These primers are initially extended by the polymerase alpha catalytic subunit and subsequently transferred to polymerase delta and polymerase epsilon for processive synthesis on the lagging and leading strand, respectively. In the primase complex, both subunits are necessary for the initial di-nucleotide formation, but the extension of the primer depends only on the catalytic subunit. Synthesizes 9-mer RNA primers (also known as the 'unit length' RNA primers). Incorporates only ribonucleotides in the presence of ribo- and deoxy-nucleotide triphosphates (rNTPs, dNTPs). Requires template thymine or cytidine to start the RNA primer synthesis, with an adenine or guanine at its 5'-end. Binds single stranded DNA. This is DNA primase small subunit (PRIM1) from Homo sapiens (Human).